Reading from the N-terminus, the 573-residue chain is NEDD4-binding protein 3-A (573 aa).

Disordered stretches follow at residues 168 to 216 (LNTM…INSL) and 382 to 407 (LRGE…EDSK). Composition is skewed to polar residues over residues 184–196 (QPSN…QSES) and 207–216 (DSRQNSINSL). Residues 289 to 539 (VEDVARQLEE…KEIQSSYREM (251 aa)) adopt a coiled-coil conformation.

The protein belongs to the N4BP3 family.

The protein resides in the cytoplasmic vesicle. Its subcellular location is the cell projection. It is found in the axon. It localises to the dendrite. In terms of biological role, plays a role in axon and dendrite arborization during cranial nerve development. Also important for neural crest migration and early development of other anterior structures including eye, brain and cranial cartilage. The polypeptide is NEDD4-binding protein 3-A (Xenopus laevis (African clawed frog)).